The following is a 219-amino-acid chain: Flagellar L-ring protein (219 aa).

A signal peptide spans 1 to 14 (MKRLVLISLVLAAG). The N-palmitoyl cysteine moiety is linked to residue cysteine 15. A lipid anchor (S-diacylglycerol cysteine) is attached at cysteine 15.

Belongs to the FlgH family. In terms of assembly, the basal body constitutes a major portion of the flagellar organelle and consists of four rings (L,P,S, and M) mounted on a central rod.

It is found in the cell outer membrane. Its subcellular location is the bacterial flagellum basal body. Functionally, assembles around the rod to form the L-ring and probably protects the motor/basal body from shearing forces during rotation. This chain is Flagellar L-ring protein, found in Dechloromonas aromatica (strain RCB).